Consider the following 110-residue polypeptide: Carboxysome shell protein CsoS1B (110 aa).

One can recognise a BMC domain in the interval 8–93 (ALGMIETRGL…VHSEVEIILP (86 aa)).

This sequence belongs to the bacterial microcompartments protein family. CsoS1 subfamily. As to quaternary structure, homohexamer with a small central pore. Interacts with the N-terminus (residues 1-136) of RuBisCO (CbbL).

It localises to the carboxysome. In terms of biological role, one of shell proteins of the carboxysome, a polyhedral inclusion where RuBisCO (ribulose bisphosphate carboxylase, ccbL-ccbS) is sequestered. Assembles into hexamers which make sheets that form the facets of the polyhedral carboxysome. The shell probably limits the diffusion of CO(2) into and out of the carboxysome. There are estimated to be 540 CsoS1B proteins per carboxysome. Functionally, unlike beta-carboxysomes, alpha-carboxysomes (Cb) can form without cargo protein. CsoS2 is essential for Cb formation and is also capable of targeting foreign proteins to the Cb. The Cb shell assembles with the aid of CsoS2; CsoS1A, CsoS1B and CsoS1C form the majority of the shell while CsoS4A and CsoS4B form vertices. CsoS1D forms pseudohexamers that probably control metabolite flux into and out of the shell. This chain is Carboxysome shell protein CsoS1B, found in Halothiobacillus neapolitanus (strain ATCC 23641 / c2) (Thiobacillus neapolitanus).